The primary structure comprises 448 residues: Protein chibby homolog 2 (448 aa).

8 positions are modified to phosphoserine: Ser-41, Ser-86, Ser-89, Ser-97, Ser-124, Ser-144, Ser-148, and Ser-150. Residues 163-198 are a coiled coil; the sequence is AKEFVLQEENKSLREENKALREENRMLRKENKILQV. Residues 206-226 are disordered; the sequence is SLGREESRPPSPLPQKDSASL. Ser-212 and Ser-225 each carry phosphoserine. Residues 242 to 267 adopt a coiled-coil conformation; that stretch reads KEDSTLQLLREENRALQQLLEQKQAY. The disordered stretch occupies residues 270–321; sequence QTEDAAAPAEESKPAPSPHEEPCSPGLLQDQGSGLSSHFEEPRGPPAPQEDS. A compositionally biased stretch (basic and acidic residues) spans 279 to 291; it reads EESKPAPSPHEEP. Residues Ser-335 and Ser-338 each carry the phosphoserine modification. Positions 356-414 form a coiled coil; the sequence is LQLLREMRQALQALLKENRLLQEENRTLQVLRAEHRGFQEENKALWENNKLKLQQKLVI.

The protein belongs to the chibby family. SPERT subfamily. In terms of assembly, homodimer. Binds to NEK1.

The chain is Protein chibby homolog 2 (CBY2) from Macaca fascicularis (Crab-eating macaque).